The primary structure comprises 278 residues: NH(3)-dependent NAD(+) synthetase (278 aa).

Gly-43–Ser-50 is an ATP binding site. Mg(2+) is bound at residue Asp-49. Residue Arg-146 coordinates deamido-NAD(+). Thr-166 provides a ligand contact to ATP. Position 171 (Glu-171) interacts with Mg(2+). Deamido-NAD(+) contacts are provided by Lys-179 and Asp-186. ATP-binding residues include Lys-195 and Thr-217. Position 266 to 267 (His-266 to Lys-267) interacts with deamido-NAD(+).

This sequence belongs to the NAD synthetase family. In terms of assembly, homodimer.

It carries out the reaction deamido-NAD(+) + NH4(+) + ATP = AMP + diphosphate + NAD(+) + H(+). The protein operates within cofactor biosynthesis; NAD(+) biosynthesis; NAD(+) from deamido-NAD(+) (ammonia route): step 1/1. Functionally, catalyzes the ATP-dependent amidation of deamido-NAD to form NAD. Uses ammonia as a nitrogen source. This is NH(3)-dependent NAD(+) synthetase from Pseudoalteromonas translucida (strain TAC 125).